The chain runs to 270 residues: Undecaprenyl-diphosphatase 1 (270 aa).

6 helical membrane-spanning segments follow: residues 79-99, 105-125, 155-175, 182-202, 215-235, and 242-262; these read NLLLGIVIAFIPAAVAGLLFS, VLFNPVCVAIAFIVGGLIILW, LALIPGTSRSGATIIGGLFLG, TEFSFFLGIPTLGAASLYSLI, VFAVGFIASFVFAFLAIRALL, and SFAVFAWYRIAFGLIVLGTWW.

The protein belongs to the UppP family.

The protein localises to the cell inner membrane. It carries out the reaction di-trans,octa-cis-undecaprenyl diphosphate + H2O = di-trans,octa-cis-undecaprenyl phosphate + phosphate + H(+). In terms of biological role, catalyzes the dephosphorylation of undecaprenyl diphosphate (UPP). Confers resistance to bacitracin. In Chromobacterium violaceum (strain ATCC 12472 / DSM 30191 / JCM 1249 / CCUG 213 / NBRC 12614 / NCIMB 9131 / NCTC 9757 / MK), this protein is Undecaprenyl-diphosphatase 1.